The chain runs to 301 residues: MTTLDDKLLGEKLQYYYSTSEDEDSDHEDKDRGRGAPASSSTPAEAELAGEGISVNTGPKGVINDWRRFKQLETEQREEQCREMERLIKKLSMSCRSHLDEEEEQQKQKDLQEKISGKMTLKECGMMDKNLDDEEFLQQYRKQRMDEMRQQLHKGPQFKQVLEIPSGEGFLDMIDKEQKSTLIMVHIYEDGVPGTEAMNGCMICLAAEYPTVKFCRVRSSVIGASSRFTRNALPALLIYKAGELIGNFVRVTDQLGEDFFAVDLEAFLQEFGLLPEKEVLVLTSVRNSATCHSEDSDLEID.

At Thr-2 the chain carries N-acetylthreonine. Residues 15–60 (YYYSTSEDEDSDHEDKDRGRGAPASSSTPAEAELAGEGISVNTGPK) are disordered. Phosphoserine is present on residues Ser-20 and Ser-25. A compositionally biased stretch (low complexity) spans 36–49 (APASSSTPAEAELA). In terms of domain architecture, Phosducin spans 36–299 (APASSSTPAE…TCHSEDSDLE (264 aa)). A thioredoxin fold region spans residues 158-301 (FKQVLEIPSG…HSEDSDLEID (144 aa)). 3 positions are modified to phosphoserine: Ser-226, Ser-293, and Ser-296.

This sequence belongs to the phosducin family. In terms of assembly, interacts with the CCT chaperonin complex. Forms a complex with the beta and gamma subunits of the GTP-binding protein, transducin.

It localises to the cell projection. The protein resides in the cilium. In terms of biological role, functions as a co-chaperone for CCT in the assembly of heterotrimeric G protein complexes, facilitates the assembly of both Gbeta-Ggamma and RGS-Gbeta5 heterodimers. Also acts as a positive regulator of hedgehog signaling and regulates ciliary function. In Rattus norvegicus (Rat), this protein is Phosducin-like protein (Pdcl).